The chain runs to 310 residues: Small ribosomal subunit biogenesis GTPase RsgA (310 aa).

One can recognise a CP-type G domain in the interval 77-238; it reads LSKQSHILAA…IIDTPGIKGF (162 aa). GTP-binding positions include 126 to 129 and 180 to 188; these read NKVD and GHSGVGKST. 4 residues coordinate Zn(2+): Cys262, Cys267, His269, and Cys275.

It belongs to the TRAFAC class YlqF/YawG GTPase family. RsgA subfamily. Monomer. Associates with 30S ribosomal subunit, binds 16S rRNA. Requires Zn(2+) as cofactor.

It is found in the cytoplasm. One of several proteins that assist in the late maturation steps of the functional core of the 30S ribosomal subunit. Helps release RbfA from mature subunits. May play a role in the assembly of ribosomal proteins into the subunit. Circularly permuted GTPase that catalyzes slow GTP hydrolysis, GTPase activity is stimulated by the 30S ribosomal subunit. The protein is Small ribosomal subunit biogenesis GTPase RsgA of Bacteroides fragilis (strain YCH46).